Consider the following 104-residue polypeptide: Type VII secretion system extracellular protein B (104 aa).

This sequence belongs to the WXG100 family. In terms of assembly, homodimer. When mixed with EsxA does not form heterodimers.

The protein localises to the secreted. Functionally, virulence factor that is important for the establishment of infection in the host. EsxB is required for EsxA synthesis as well as secretion. Mediates together with EsxA the release of S.aureus from the host cell. Also inhibits host cytokine production and thus modulates dendritic cell-mediated immunity. The sequence is that of Type VII secretion system extracellular protein B from Staphylococcus aureus (strain MSSA476).